The chain runs to 1456 residues: ABC-type transporter eriD (1456 aa).

Residues 1–65 are disordered; sequence MAENEKVTYG…DPRMDPLSGK (65 aa). Residues 30–40 show a composition bias toward polar residues; the sequence is SMTNASRSSVY. In terms of domain architecture, ABC transporter 1 spans 118 to 372; sequence LDIPGLARDI…FIDMGFECPP (255 aa). Helical transmembrane passes span 481–501, 515–535, 561–581, 590–610, 623–643, and 734–754; these read NFLT…SIFY, ALLF…ILQI, VLCD…VLYF, GAFF…SMIF, AMAP…FTIP, and ILFG…EFIA. The disordered stretch occupies residues 775–799; that stretch reads EGASEDEEAGTGSTGTRTQEEPVDK. The region spanning 813-1056 is the ABC transporter 2 domain; it reads FHWEDVIYDI…IIDYFEGQGA (244 aa). Residue 849–856 coordinates ATP; the sequence is GASGAGKT. 7 helical membrane-spanning segments follow: residues 1148–1168, 1184–1204, 1233–1253, 1269–1289, 1301–1321, 1337–1357, and 1423–1443; these read YIYS…FSFF, VFMG…HFVT, LPWN…PVGM, LMFL…HMLI, IASL…GPSG, PFTY…PAFC, and FGFL…FYWL.

Belongs to the ABC transporter superfamily. ABCG family. PDR (TC 3.A.1.205) subfamily.

The protein resides in the membrane. Its function is as follows. ABC-type transporter; part of the gene cluster that mediates the biosynthesis of erinacines, cyathane-xylosides that show unique biological activities, including leishmanicidal activity, stimulating activity for nerve growth-factor synthesis, and agonistic activity toward the kappa opioid receptor. This is ABC-type transporter eriD from Hericium erinaceus (Lion's mane mushroom).